We begin with the raw amino-acid sequence, 193 residues long: MTAHVGVLALQGDTREHLAALREAGAEASTVRRLSELAAVDALVIPGGESTAISHLLREFDLLEPLRARIAEGMPCYGSCAGMILLATEIADAGVPGRAAVPLKGIDMTVRRNAFGRQVDSFEGDIDFVGLDTPVHAVFIRAPWVERIGPDVEVLARADDHIVAVRQGPMFATAFHPEVTGDRRIHKLFVDSL.

48-50 (GES) is an L-glutamine binding site. The Nucleophile role is filled by cysteine 80. L-glutamine contacts are provided by residues arginine 112 and 140-141 (IR). Residues histidine 176 and glutamate 178 each act as charge relay system in the active site.

This sequence belongs to the glutaminase PdxT/SNO family. In terms of assembly, in the presence of PdxS, forms a dodecamer of heterodimers. Only shows activity in the heterodimer.

The catalysed reaction is aldehydo-D-ribose 5-phosphate + D-glyceraldehyde 3-phosphate + L-glutamine = pyridoxal 5'-phosphate + L-glutamate + phosphate + 3 H2O + H(+). The enzyme catalyses L-glutamine + H2O = L-glutamate + NH4(+). It participates in cofactor biosynthesis; pyridoxal 5'-phosphate biosynthesis. Functionally, catalyzes the hydrolysis of glutamine to glutamate and ammonia as part of the biosynthesis of pyridoxal 5'-phosphate. The resulting ammonia molecule is channeled to the active site of PdxS. The chain is Pyridoxal 5'-phosphate synthase subunit PdxT from Mycolicibacterium smegmatis (strain ATCC 700084 / mc(2)155) (Mycobacterium smegmatis).